A 173-amino-acid polypeptide reads, in one-letter code: dCTP deaminase, dUMP-forming (173 aa).

Residues 93–98 (RSSIGR), Asp111, 119–121 (TLE), and Gln138 each bind dCTP. The Proton donor/acceptor role is filled by Glu121.

It belongs to the dCTP deaminase family. As to quaternary structure, homotrimer.

The enzyme catalyses dCTP + 2 H2O = dUMP + NH4(+) + diphosphate. It functions in the pathway pyrimidine metabolism; dUMP biosynthesis; dUMP from dCTP: step 1/1. Its function is as follows. Bifunctional enzyme that catalyzes both the deamination of dCTP to dUTP and the hydrolysis of dUTP to dUMP without releasing the toxic dUTP intermediate. The chain is dCTP deaminase, dUMP-forming from Leptospira borgpetersenii serovar Hardjo-bovis (strain JB197).